Reading from the N-terminus, the 624-residue chain is Double-stranded RNA-binding protein Staufen homolog 2 (624 aa).

5 consecutive DRBM domains span residues 55 to 122 (STSI…NGLA), 142 to 228 (QRAN…SEIS), 254 to 321 (MKSF…PEYG), 354 to 422 (RRRE…IADQ), and 540 to 604 (LTCL…EKAD). A disordered region spans residues 197-223 (LRNEPIPERSSLNGEANRGPEEDKDAN). Basic and acidic residues predominate over residues 214–223 (RGPEEDKDAN). 2 disordered regions span residues 401–428 (EKTG…TPKG) and 592–624 (PFEQ…KAVV). The segment covering 415–426 (QNSGIADQTSTP) has biased composition (polar residues). The span at 596–605 (AKLRGEKADN) shows a compositional bias: basic and acidic residues.

In terms of biological role, RNA-binding protein required for the microtubule-dependent transport of RNAs within polarized cell types. This chain is Double-stranded RNA-binding protein Staufen homolog 2 (stau2), found in Xenopus tropicalis (Western clawed frog).